Consider the following 64-residue polypeptide: DNA-binding protein 7a (64 aa).

It belongs to the 7 kDa DNA-binding/endoribonuclease P2 family. As to quaternary structure, monomer.

It localises to the cytoplasm. In terms of biological role, can constrain negative DNA supercoils. May be involved in maintaining the integrity of the genome at high temperature. This is DNA-binding protein 7a from Saccharolobus islandicus (strain L.D.8.5 / Lassen #2) (Sulfolobus islandicus).